Here is a 525-residue protein sequence, read N- to C-terminus: Bifunctional purine biosynthesis protein PurH (525 aa).

An MGS-like domain is found at 10–156; sequence HRIPIRRALV…KNHPSVAIVT (147 aa).

This sequence belongs to the PurH family.

The enzyme catalyses (6R)-10-formyltetrahydrofolate + 5-amino-1-(5-phospho-beta-D-ribosyl)imidazole-4-carboxamide = 5-formamido-1-(5-phospho-D-ribosyl)imidazole-4-carboxamide + (6S)-5,6,7,8-tetrahydrofolate. It carries out the reaction IMP + H2O = 5-formamido-1-(5-phospho-D-ribosyl)imidazole-4-carboxamide. The protein operates within purine metabolism; IMP biosynthesis via de novo pathway; 5-formamido-1-(5-phospho-D-ribosyl)imidazole-4-carboxamide from 5-amino-1-(5-phospho-D-ribosyl)imidazole-4-carboxamide (10-formyl THF route): step 1/1. It functions in the pathway purine metabolism; IMP biosynthesis via de novo pathway; IMP from 5-formamido-1-(5-phospho-D-ribosyl)imidazole-4-carboxamide: step 1/1. This Nocardioides sp. (strain ATCC BAA-499 / JS614) protein is Bifunctional purine biosynthesis protein PurH.